The sequence spans 1102 residues: PAN2-PAN3 deadenylation complex catalytic subunit PAN2 (1102 aa).

WD repeat units follow at residues Asp20–Ala59, Asp104–Gln144, and Asn269–Asp308. A linker region spans residues Asp308–Pro445. Residues Ala423–Ser442 form a disordered region. The USP domain maps to Glu446–Lys833. The Exonuclease domain occupies Val881–Tyr1054. 4 residues coordinate a divalent metal cation: Asp884, Glu886, Asp993, and Asp1046.

The protein belongs to the peptidase C19 family. PAN2 subfamily. Forms a heterotrimer with an asymmetric homodimer of the regulatory subunit PAN3 to form the poly(A)-nuclease (PAN) deadenylation complex. The cofactor is a divalent metal cation.

It is found in the cytoplasm. The catalysed reaction is Exonucleolytic cleavage of poly(A) to 5'-AMP.. Its activity is regulated as follows. Positively regulated by the regulatory subunit PAN3. In terms of biological role, catalytic subunit of the poly(A)-nuclease (PAN) deadenylation complex, one of two cytoplasmic mRNA deadenylases involved in mRNA turnover. PAN specifically shortens poly(A) tails of RNA and the activity is stimulated by poly(A)-binding protein PAB1. PAN deadenylation is followed by rapid degradation of the shortened mRNA tails by the CCR4-NOT complex. Deadenylated mRNAs are then degraded by two alternative mechanisms, namely exosome-mediated 3'-5' exonucleolytic degradation, or deadenylation-dependent mRNA decaping and subsequent 5'-3' exonucleolytic degradation by XRN1. May also be involved in post-transcriptional maturation of mRNA poly(A) tails. This chain is PAN2-PAN3 deadenylation complex catalytic subunit PAN2, found in Chaetomium globosum (strain ATCC 6205 / CBS 148.51 / DSM 1962 / NBRC 6347 / NRRL 1970) (Soil fungus).